Here is a 57-residue protein sequence, read N- to C-terminus: Preprotein translocase subunit SecG (57 aa).

Residues 1–33 lie on the Cytoplasmic side of the membrane; that stretch reads MARRRRYEGLNPFVAAGLIKFSEEGELERIKLT. The chain crosses the membrane as a helical span at residues 34–55; sequence PKSAVVISVALIAAILVLNLIH. Over 56–57 the chain is Extracellular; sequence PL.

It belongs to the SEC61-beta family. Component of the protein translocase complex. Heterotrimer consisting of alpha (SecY), beta (SecG) and gamma (SecE) subunits. Can form oligomers of the heterotrimer.

Its subcellular location is the cell membrane. Functionally, involved in protein export. The function of the beta subunit is unknown, but it may be involved in stabilization of the trimeric complex. This is Preprotein translocase subunit SecG from Pyrobaculum neutrophilum (strain DSM 2338 / JCM 9278 / NBRC 100436 / V24Sta) (Thermoproteus neutrophilus).